A 144-amino-acid chain; its full sequence is Probable low molecular weight protein-tyrosine-phosphatase AmsI (144 aa).

Residue Cys9 is the Nucleophile of the active site. Residue Arg15 is part of the active site. Asp115 (proton donor) is an active-site residue.

It belongs to the low molecular weight phosphotyrosine protein phosphatase family.

It carries out the reaction O-phospho-L-tyrosyl-[protein] + H2O = L-tyrosyl-[protein] + phosphate. Its function is as follows. May function as a phosphatase required for amylovoran (an exopolysaccharide that functions as a virulence factor) production. The chain is Probable low molecular weight protein-tyrosine-phosphatase AmsI (amsI) from Erwinia amylovora (Fire blight bacteria).